The primary structure comprises 334 residues: MKNNNSGKTSLYPEEKEEKILVDPYGRKVTGLRISITDRCNLSCMYCHNEGADCCSCGSLGHEMSPELICGIVREAAKFGVRKVKFSGGEPLFRKDFEEILACLPPLKEVSATTNGILLEKRAKTLKAAGLDRVNVSLDSLNPEKYGKITGAPPGTLEKVIKGIDSAVEAGLTPVKLNMVLLKGVNDNEIDAMMEFIRPYGGKVILQLIELMNIDPQLSKYMIDSKALEKILEERASEVRVRHLHHRKKYIIDGVEVEFVRPMDNSEFCAHCSRLRVTADGKFKPCLLVHDNLVDVREAKSPKEIEKLLRLAVSRRKPYYIPATGVTKLEKWQE.

One can recognise a Radical SAM core domain in the interval 24-256 (PYGRKVTGLR…RKKYIIDGVE (233 aa)). R33 serves as a coordination point for GTP. Residues C40 and C44 each contribute to the [4Fe-4S] cluster site. Y46 provides a ligand contact to S-adenosyl-L-methionine. Residue C47 coordinates [4Fe-4S] cluster. K85 lines the GTP pocket. An S-adenosyl-L-methionine-binding site is contributed by G89. T113 serves as a coordination point for GTP. S137 lines the S-adenosyl-L-methionine pocket. K176 contacts GTP. Residues C269 and C272 each coordinate [4Fe-4S] cluster. 274–276 (RLR) contacts GTP. C286 is a [4Fe-4S] cluster binding site.

The protein belongs to the radical SAM superfamily. MoaA family. It depends on [4Fe-4S] cluster as a cofactor.

It catalyses the reaction GTP + AH2 + S-adenosyl-L-methionine = (8S)-3',8-cyclo-7,8-dihydroguanosine 5'-triphosphate + 5'-deoxyadenosine + L-methionine + A + H(+). It participates in cofactor biosynthesis; molybdopterin biosynthesis. In terms of biological role, catalyzes the cyclization of GTP to (8S)-3',8-cyclo-7,8-dihydroguanosine 5'-triphosphate. This chain is Probable GTP 3',8-cyclase, found in Methanosarcina acetivorans (strain ATCC 35395 / DSM 2834 / JCM 12185 / C2A).